A 432-amino-acid chain; its full sequence is MMRNVWKSGLRRSAWIGLLMVLCVGVARAQLYVEIAGAGSSQYPIAIANFQGESQIPQDITAIVRADLVHSGRFSNVDVAGAVVPDSPAPDLGAWKSRGAAAFVGGTVTRNGDRYEIRFRLYDTAKGESLGGLALTRGEGQLRLAAHEIADYIYQKLIGDRGVFATRLSYVSKVGRRYQLQISDSDGANPQVALTSNEPIISPAWSPDGTKVAYVSFESRKPVVYVHDLISGRRAVISNQKGNNSAPAWSPDGRRVAVALSRDGNTQIYQVNADGSGLRRLTRSSAIDTEPSFSPDGRSIYFTSDRGGAPQIYRMPTEGEDAGSAQRVTFKGGYNTSPRVSPDGKLLAYISRVGGAFKLYVQDLSNGDVTGLTDTSYDESPSFAANGKFILYATRVGGRSVLAAVSTDGRTRQILSLQAGTVREPAWGPFMQ.

The first 29 residues, 1–29 (MMRNVWKSGLRRSAWIGLLMVLCVGVARA), serve as a signal peptide directing secretion.

This sequence belongs to the TolB family. The Tol-Pal system is composed of five core proteins: the inner membrane proteins TolA, TolQ and TolR, the periplasmic protein TolB and the outer membrane protein Pal. They form a network linking the inner and outer membranes and the peptidoglycan layer.

The protein localises to the periplasm. Part of the Tol-Pal system, which plays a role in outer membrane invagination during cell division and is important for maintaining outer membrane integrity. This chain is Tol-Pal system protein TolB, found in Ralstonia nicotianae (strain ATCC BAA-1114 / GMI1000) (Ralstonia solanacearum).